We begin with the raw amino-acid sequence, 393 residues long: Formate-dependent phosphoribosylglycinamide formyltransferase (393 aa).

Residues 22–23 (EL) and glutamate 82 each bind N(1)-(5-phospho-beta-D-ribosyl)glycinamide. Residues arginine 114, lysine 155, 160 to 165 (SSGKGQ), 195 to 198 (EGFV), and glutamate 203 each bind ATP. The ATP-grasp domain maps to 119–308 (RLAAEELGLP…EFALHARAIL (190 aa)). Positions 267 and 279 each coordinate Mg(2+). Residues aspartate 286, lysine 356, and 363–364 (RR) contribute to the N(1)-(5-phospho-beta-D-ribosyl)glycinamide site.

The protein belongs to the PurK/PurT family. Homodimer.

It carries out the reaction N(1)-(5-phospho-beta-D-ribosyl)glycinamide + formate + ATP = N(2)-formyl-N(1)-(5-phospho-beta-D-ribosyl)glycinamide + ADP + phosphate + H(+). It participates in purine metabolism; IMP biosynthesis via de novo pathway; N(2)-formyl-N(1)-(5-phospho-D-ribosyl)glycinamide from N(1)-(5-phospho-D-ribosyl)glycinamide (formate route): step 1/1. Involved in the de novo purine biosynthesis. Catalyzes the transfer of formate to 5-phospho-ribosyl-glycinamide (GAR), producing 5-phospho-ribosyl-N-formylglycinamide (FGAR). Formate is provided by PurU via hydrolysis of 10-formyl-tetrahydrofolate. The sequence is that of Formate-dependent phosphoribosylglycinamide formyltransferase from Nitratidesulfovibrio vulgaris (strain DSM 19637 / Miyazaki F) (Desulfovibrio vulgaris).